A 428-amino-acid chain; its full sequence is Histidinol dehydrogenase (428 aa).

3 residues coordinate NAD(+): tyrosine 126, glutamine 188, and asparagine 211. Positions 234, 256, and 259 each coordinate substrate. The Zn(2+) site is built by glutamine 256 and histidine 259. Residues glutamate 324 and histidine 325 each act as proton acceptor in the active site. Substrate-binding residues include histidine 325, aspartate 358, glutamate 412, and histidine 417. Residue aspartate 358 coordinates Zn(2+). Histidine 417 is a binding site for Zn(2+).

It belongs to the histidinol dehydrogenase family. Zn(2+) serves as cofactor.

It catalyses the reaction L-histidinol + 2 NAD(+) + H2O = L-histidine + 2 NADH + 3 H(+). Its pathway is amino-acid biosynthesis; L-histidine biosynthesis; L-histidine from 5-phospho-alpha-D-ribose 1-diphosphate: step 9/9. Its function is as follows. Catalyzes the sequential NAD-dependent oxidations of L-histidinol to L-histidinaldehyde and then to L-histidine. This is Histidinol dehydrogenase from Chlorobaculum tepidum (strain ATCC 49652 / DSM 12025 / NBRC 103806 / TLS) (Chlorobium tepidum).